A 141-amino-acid polypeptide reads, in one-letter code: ER membrane protein complex subunit 5 (141 aa).

The Cytoplasmic segment spans residues 1–6 (MSFVSK). Residues 7–27 (LLYTVSALVLFHSGFSSYEFH) traverse the membrane as a helical segment. Over 28–48 (HLLKLNSLNNAQGAISKLPKD) the chain is Lumenal. Residues 49-69 (IMYETYAGLILFVLAVFTSFE) traverse the membrane as a helical segment. Topologically, residues 70–141 (KLQYLPIESN…WASNTVKKEK (72 aa)) are cytoplasmic.

Belongs to the membrane magnesium transporter (TC 1.A.67) family. In terms of assembly, component of the ER membrane protein complex (EMC), which is composed of EMC1, EMC2, EMC3, EMC4, EMC5 and EMC6.

It is found in the endoplasmic reticulum membrane. Functionally, part of the endoplasmic reticulum membrane protein complex (EMC) that enables the energy-independent insertion into endoplasmic reticulum membranes of newly synthesized membrane proteins. Preferentially accommodates proteins with transmembrane domains that are weakly hydrophobic or contain destabilizing features such as charged and aromatic residues. Involved in the cotranslational insertion of multi-pass membrane proteins in which stop-transfer membrane-anchor sequences become ER membrane spanning helices. It is also required for the post-translational insertion of tail-anchored/TA proteins in endoplasmic reticulum membranes. By mediating the proper cotranslational insertion of N-terminal transmembrane domains in an N-exo topology, with translocated N-terminus in the lumen of the ER, controls the topology of multi-pass membrane proteins. The sequence is that of ER membrane protein complex subunit 5 (EMC5) from Saccharomyces cerevisiae (strain ATCC 204508 / S288c) (Baker's yeast).